A 1093-amino-acid chain; its full sequence is Semaphorin-5B (1093 aa).

An N-terminal signal peptide occupies residues 1 to 19; the sequence is MVVPGPLALSLLLSSLTLL. The Extracellular portion of the chain corresponds to 20–978; it reads VSHLSSSQDI…TSCGGFNLIH (959 aa). Residues 45-495 form the Sema domain; that stretch reads HPIVAFEDLK…LSDRVLRVPL (451 aa). N-linked (GlcNAc...) asparagine glycosylation is found at asparagine 59 and asparagine 95. 2 disulfide bridges follow: cysteine 114–cysteine 124 and cysteine 141–cysteine 150. Residues asparagine 157, asparagine 178, and asparagine 287 are each glycosylated (N-linked (GlcNAc...) asparagine). 2 disulfide bridges follow: cysteine 264/cysteine 367 and cysteine 288/cysteine 330. N-linked (GlcNAc...) asparagine glycans are attached at residues asparagine 333, asparagine 378, asparagine 532, asparagine 539, asparagine 547, and asparagine 602. TSP type-1 domains follow at residues 551 to 605, 606 to 662, 664 to 713, 721 to 776, 795 to 850, 852 to 907, and 908 to 952; these read DGGF…NCSR, NGAW…TPCP, PIFW…EACP, WTPW…ACDT, NGGW…QACP, RGAW…QACP, and EGWS…RPCP. Intrachain disulfides connect cysteine 618–cysteine 655, cysteine 622–cysteine 661, cysteine 633–cysteine 645, cysteine 676–cysteine 707, cysteine 680–cysteine 712, and cysteine 691–cysteine 697. Asparagine 728 carries an N-linked (GlcNAc...) asparagine glycan. Cystine bridges form between cysteine 807–cysteine 844, cysteine 811–cysteine 849, cysteine 822–cysteine 834, cysteine 864–cysteine 901, cysteine 868–cysteine 906, and cysteine 879–cysteine 891. A glycan (N-linked (GlcNAc...) asparagine) is linked at asparagine 944. Residues 979-999 form a helical membrane-spanning segment; sequence LIVTGVSCFLVSGLLTLAVYL. Over 1000 to 1093 the chain is Cytoplasmic; the sequence is SCQHCQRQSQ…SPGQRCFPNS (94 aa).

This sequence belongs to the semaphorin family. In terms of tissue distribution, in adult, only detected in brain.

Its subcellular location is the membrane. May act as a positive axonal guidance cue. The protein is Semaphorin-5B (Sema5b) of Mus musculus (Mouse).